The chain runs to 915 residues: Translation initiation factor IF-2 (915 aa).

Disordered stretches follow at residues 1–105 (MSEG…RALT) and 121–295 (VEAA…RAAI). The span at 57 to 81 (PGTPSAPEGGSSSAPAPQSGNAPQG) shows a compositional bias: low complexity. The span at 84-101 (RSGGGNRGSGRGGAGGAG) shows a compositional bias: gly residues. Basic and acidic residues-rich tracts occupy residues 121 to 135 (VEAARREVERREQEK) and 143 to 180 (EEARRREEEAKRAAEEEARRKEQEEADRIAAEAARKAA). The span at 186–195 (AEAPPVPPPA) shows a compositional bias: pro residues. Low complexity-rich tracts occupy residues 201–213 (AAPSSRSAPSRTA) and 230–239 (KVPVAAPSAP). Residues 243–256 (RLRERGDEGEEERK) are compositionally biased toward basic and acidic residues. Low complexity predominate over residues 266–278 (PAPRKAAAPVAKK). Basic and acidic residues predominate over residues 279-295 (AVAEPRRGGRIDVRAAI). Positions 414-584 (PRPPVVTVMG…LLQAEVLDLK (171 aa)) constitute a tr-type G domain. The G1 stretch occupies residues 423–430 (GHVDHGKT). Residue 423–430 (GHVDHGKT) coordinates GTP. The segment at 448–452 (GITQH) is G2. The segment at 470–473 (DTPG) is G3. Residues 470–474 (DTPGH) and 524–527 (NKCD) contribute to the GTP site. The segment at 524–527 (NKCD) is G4. The tract at residues 560–562 (SAL) is G5.

The protein belongs to the TRAFAC class translation factor GTPase superfamily. Classic translation factor GTPase family. IF-2 subfamily.

It is found in the cytoplasm. Its function is as follows. One of the essential components for the initiation of protein synthesis. Protects formylmethionyl-tRNA from spontaneous hydrolysis and promotes its binding to the 30S ribosomal subunits. Also involved in the hydrolysis of GTP during the formation of the 70S ribosomal complex. The polypeptide is Translation initiation factor IF-2 (Granulibacter bethesdensis (strain ATCC BAA-1260 / CGDNIH1)).